A 650-amino-acid chain; its full sequence is 1-deoxy-D-xylulose-5-phosphate synthase (650 aa).

Residues His-73 and 113-115 contribute to the thiamine diphosphate site; that span reads SHA. Asp-145 lines the Mg(2+) pocket. Thiamine diphosphate contacts are provided by residues 146–147, Asn-175, Tyr-287, and Glu-369; that span reads GA. Asn-175 lines the Mg(2+) pocket. The segment at 629–650 is disordered; sequence SARPLPEDAERVPMRAEDDEQA. Residues 633-644 show a composition bias toward basic and acidic residues; that stretch reads LPEDAERVPMRA.

The protein belongs to the transketolase family. DXPS subfamily. As to quaternary structure, homodimer. Requires Mg(2+) as cofactor. Thiamine diphosphate is required as a cofactor.

The enzyme catalyses D-glyceraldehyde 3-phosphate + pyruvate + H(+) = 1-deoxy-D-xylulose 5-phosphate + CO2. It participates in metabolic intermediate biosynthesis; 1-deoxy-D-xylulose 5-phosphate biosynthesis; 1-deoxy-D-xylulose 5-phosphate from D-glyceraldehyde 3-phosphate and pyruvate: step 1/1. Functionally, catalyzes the acyloin condensation reaction between C atoms 2 and 3 of pyruvate and glyceraldehyde 3-phosphate to yield 1-deoxy-D-xylulose-5-phosphate (DXP). The protein is 1-deoxy-D-xylulose-5-phosphate synthase of Clavibacter sepedonicus (Clavibacter michiganensis subsp. sepedonicus).